Here is a 346-residue protein sequence, read N- to C-terminus: Secreted frizzled-related protein 4 (346 aa).

An N-terminal signal peptide occupies residues 1–18 (MFLSILVALCLWLHLALG). An FZ domain is found at 19-139 (VRGAPCEAVR…VYDRGVCISP (121 aa)). Disulfide bonds link Cys-24-Cys-85, Cys-32-Cys-78, Cys-69-Cys-108, Cys-97-Cys-136, and Cys-101-Cys-125. N-linked (GlcNAc...) asparagine glycans are attached at residues Asn-38 and Asn-68. N-linked (GlcNAc...) asparagine glycans are attached at residues Asn-116, Asn-194, and Asn-240. The 130-residue stretch at 178 to 307 (CKCKKVKPTL…IQDKKKTAGR (130 aa)) folds into the NTR domain. A compositionally biased stretch (basic and acidic residues) spans 294–303 (QRRTIQDKKK). The segment at 294 to 346 (QRRTIQDKKKTAGRTSRSNPPKPKGKPPAPKPASPKKNIKTRSAQKKTNPKKV) is disordered. A compositionally biased stretch (pro residues) spans 313-326 (PPKPKGKPPAPKPA). Over residues 330 to 346 (KNIKTRSAQKKTNPKKV) the composition is skewed to basic residues.

The protein belongs to the secreted frizzled-related protein (sFRP) family.

Its subcellular location is the secreted. In terms of biological role, soluble frizzled-related proteins (sFRPS) function as modulators of Wnt signaling through direct interaction with Wnts. They have a role in regulating cell growth and differentiation in specific cell types. SFRP4 plays a role in bone morphogenesis. May also act as a regulator of adult uterine morphology and function. May also increase apoptosis during ovulation possibly through modulation of FZ1/FZ4/WNT4 signaling. Has phosphaturic effects by specifically inhibiting sodium-dependent phosphate uptake. The protein is Secreted frizzled-related protein 4 (SFRP4) of Macaca mulatta (Rhesus macaque).